Reading from the N-terminus, the 1922-residue chain is Endoribonuclease Dicer (1922 aa).

The Helicase ATP-binding domain maps to 51-227 (LLEAALDHNT…ELEEKIQKLE (177 aa)). Position 64–71 (64–71 (LNTGSGKT)) interacts with ATP. The short motif at 175-178 (DECH) is the DECH box element. The interval 256–595 (DCGPFTDRSG…LRNKCSKSVD (340 aa)) is required for interaction with PRKRA and TARBP2. A disordered region spans residues 409 to 433 (YVSWSDSEDDDEDEEIEEKEKPETN). Phosphoserine is present on residues Ser413 and Ser415. Residues 414–425 (DSEDDDEDEEIE) are compositionally biased toward acidic residues. Residues 433–602 (NFPSPFTNIL…SVDTGETDID (170 aa)) form the Helicase C-terminal domain. The Dicer dsRNA-binding fold domain occupies 630–722 (AIGHINRYCA…MPVGKETVKY (93 aa)). Residues 895–1042 (KFMEDIEKSE…LVPELCAIHP (148 aa)) form the PAZ domain. Phosphoserine is present on residues Ser1016 and Ser1160. Residues 1276-1403 (DSEQSPSIGY…TDKWEKDEMT (128 aa)) form the RNase III 1 domain. Mg(2+) contacts are provided by Glu1316, Asp1395, and Glu1398. Phosphoserine is present on residues Ser1460, Ser1468, and Ser1470. The RNase III 2 domain maps to 1666–1824 (FENFEKKINY…LAGAIYMDSG (159 aa)). Glu1705, Asp1810, and Glu1813 together coordinate Mg(2+). Residues 1849-1914 (VPRSPVRELL…ARRALRSLKA (66 aa)) enclose the DRBM domain. Ser1868 carries the phosphoserine modification.

Belongs to the helicase family. Dicer subfamily. Component of the RISC loading complex (RLC), or micro-RNA (miRNA) loading complex (miRLC), which is composed of DICER1, AGO2 and TARBP2; DICER1 and TARBP2 are required to process precursor miRNAs (pre-miRNAs) to mature miRNAs and then load them onto AGO2. Note that the trimeric RLC/miRLC is also referred to as RISC. Interacts with DHX9, AGO1, PIWIL1 and PRKRA. Associates with the 60S ribosome. Interacts with BCDIN3D. Interacts with AGO2, TARBP2, EIF6, MOV10 and RPL7A (60S ribosome subunit); they form a large RNA-induced silencing complex (RISC). Interacts (via Dicer dsRNA-binding fold domain) with ALOX5 (via PLAT domain); this interaction enhances arachidonate 5-lipoxygenase activity and modifies the miRNA precursor processing activity of DICER1. As to quaternary structure, (Microbial infection) Interacts with ebolavirus transcriptional activator VP30; this interaction prevents TARBP2/TRBP binding to DICER1 and thus allows the virus to counteract host RNA silencing. In terms of assembly, (Microbial infection) Interacts with ebolavirus transcriptional activator VP35; this interaction prevents TARBP2/TRBP binding to DICER1 and thus allows the virus to counteract host RNA silencing. The cofactor is Mg(2+). It depends on Mn(2+) as a cofactor.

The protein localises to the cytoplasm. It is found in the perinuclear region. It carries out the reaction Endonucleolytic cleavage to 5'-phosphomonoester.. Functionally, double-stranded RNA (dsRNA) endoribonuclease playing a central role in short dsRNA-mediated post-transcriptional gene silencing. Cleaves naturally occurring long dsRNAs and short hairpin pre-microRNAs (miRNA) into fragments of twenty-one to twenty-three nucleotides with 3' overhang of two nucleotides, producing respectively short interfering RNAs (siRNA) and mature microRNAs. SiRNAs and miRNAs serve as guide to direct the RNA-induced silencing complex (RISC) to complementary RNAs to degrade them or prevent their translation. Gene silencing mediated by siRNAs, also called RNA interference, controls the elimination of transcripts from mobile and repetitive DNA elements of the genome but also the degradation of exogenous RNA of viral origin for instance. The miRNA pathway on the other side is a mean to specifically regulate the expression of target genes. The protein is Endoribonuclease Dicer (DICER1) of Homo sapiens (Human).